Consider the following 430-residue polypeptide: 3-phosphoshikimate 1-carboxyvinyltransferase (430 aa).

3-phosphoshikimate is bound by residues Lys33, Ser34, and Arg38. A phosphoenolpyruvate-binding site is contributed by Lys33. Residues Gly101 and Arg129 each contribute to the phosphoenolpyruvate site. 3-phosphoshikimate contacts are provided by Ser172, Ser173, Gln174, Ser201, Glu319, and His346. Position 174 (Gln174) interacts with phosphoenolpyruvate. Catalysis depends on Glu319, which acts as the Proton acceptor. The phosphoenolpyruvate site is built by Arg350, Arg391, and Lys416.

This sequence belongs to the EPSP synthase family. In terms of assembly, monomer.

The protein localises to the cytoplasm. The enzyme catalyses 3-phosphoshikimate + phosphoenolpyruvate = 5-O-(1-carboxyvinyl)-3-phosphoshikimate + phosphate. It functions in the pathway metabolic intermediate biosynthesis; chorismate biosynthesis; chorismate from D-erythrose 4-phosphate and phosphoenolpyruvate: step 6/7. In terms of biological role, catalyzes the transfer of the enolpyruvyl moiety of phosphoenolpyruvate (PEP) to the 5-hydroxyl of shikimate-3-phosphate (S3P) to produce enolpyruvyl shikimate-3-phosphate and inorganic phosphate. This Corynebacterium glutamicum (strain R) protein is 3-phosphoshikimate 1-carboxyvinyltransferase.